A 255-amino-acid polypeptide reads, in one-letter code: 3-oxo-5-alpha-steroid 4-dehydrogenase 1 (255 aa).

5 helical membrane-spanning segments follow: residues 6–26 (LCLL…AFVG), 82–102 (VLLA…PVLI), 107–127 (PTLL…GYLQ), 142–162 (VTHP…VINI), and 205–225 (FALA…LCAL).

This sequence belongs to the steroid 5-alpha reductase family.

The protein resides in the microsome membrane. It localises to the endoplasmic reticulum membrane. It catalyses the reaction a 3-oxo-5alpha-steroid + NADP(+) = a 3-oxo-Delta(4)-steroid + NADPH + H(+). The catalysed reaction is 5alpha-pregnane-3,20-dione + NADP(+) = progesterone + NADPH + H(+). The enzyme catalyses 17beta-hydroxy-5alpha-androstan-3-one + NADP(+) = testosterone + NADPH + H(+). It carries out the reaction androst-4-ene-3,17-dione + NADPH + H(+) = 5alpha-androstan-3,17-dione + NADP(+). Converts testosterone into 5-alpha-dihydrotestosterone and progesterone or corticosterone into their corresponding 5-alpha-3-oxosteroids. It plays a central role in sexual differentiation and androgen physiology. The chain is 3-oxo-5-alpha-steroid 4-dehydrogenase 1 from Mus musculus (Mouse).